The sequence spans 489 residues: Glutamyl-tRNA(Gln) amidotransferase subunit A (489 aa).

Active-site charge relay system residues include lysine 79 and serine 158. Catalysis depends on serine 182, which acts as the Acyl-ester intermediate.

It belongs to the amidase family. GatA subfamily. As to quaternary structure, heterotrimer of A, B and C subunits.

The catalysed reaction is L-glutamyl-tRNA(Gln) + L-glutamine + ATP + H2O = L-glutaminyl-tRNA(Gln) + L-glutamate + ADP + phosphate + H(+). In terms of biological role, allows the formation of correctly charged Gln-tRNA(Gln) through the transamidation of misacylated Glu-tRNA(Gln) in organisms which lack glutaminyl-tRNA synthetase. The reaction takes place in the presence of glutamine and ATP through an activated gamma-phospho-Glu-tRNA(Gln). In Anaplasma marginale (strain Florida), this protein is Glutamyl-tRNA(Gln) amidotransferase subunit A.